The chain runs to 721 residues: Ophiobolin F synthase oblA (721 aa).

A (7Z)-ophiobola-7,19-dien-3-ol synthase region spans residues 5–325 (YDQPYSVLLD…RYNLKAEWNE (321 aa)). Mg(2+)-binding residues include aspartate 97 and aspartate 101. Aspartate 97 serves as a coordination point for substrate. A DDXXD 1 motif is present at residues 97–101 (DDVID). Substrate-binding positions include 185–188 (RSLD), asparagine 229, 233–237 (SFEKE), and 316–317 (RY). The short motif at 229-237 (NDLFSFEKE) is the NSE/DTE element. Positions 326–721 (LQMLRAKHGV…LRLMMEMLKV (396 aa)) are geranylfarnesyl diphosphate synthase. Positions 348 to 387 (SMDHIWKKGSTQGESKGEKRKRQSVNGTNGVNGTNGVKKP) are disordered. Residues 372–384 (VNGTNGVNGTNGV) are compositionally biased toward low complexity. Positions 432, 435, and 464 each coordinate isopentenyl diphosphate. Mg(2+) is bound by residues aspartate 471 and aspartate 475. The DDXXD 2 signature appears at 471-475 (DDLED). Dimethylallyl diphosphate is bound at residue arginine 480. Position 481 (arginine 481) interacts with isopentenyl diphosphate. 6 residues coordinate dimethylallyl diphosphate: lysine 558, threonine 559, glutamine 597, asparagine 604, lysine 614, and lysine 624.

It in the N-terminal section; belongs to the terpene synthase family. This sequence in the C-terminal section; belongs to the FPP/GGPP synthase family. The cofactor is Mg(2+).

It carries out the reaction isopentenyl diphosphate + (2E,6E)-farnesyl diphosphate = (2E,6E,10E)-geranylgeranyl diphosphate + diphosphate. The enzyme catalyses isopentenyl diphosphate + (2E,6E,10E)-geranylgeranyl diphosphate = (2E,6E,10E,14E)-geranylfarnesyl diphosphate + diphosphate. It catalyses the reaction (2E,6E,10E,14E)-geranylfarnesyl diphosphate + H2O = ophiobolin F + diphosphate. The protein operates within secondary metabolite biosynthesis; terpenoid biosynthesis. In terms of biological role, bifunctional sesterterpene synthase; part of the gene cluster that mediates the biosynthesis of the sesterterpenes ophiobolins, fungal phytotoxins with potential anti-cancer activities. The first step of the pathway is performed by the sesterterpene synthase oblA that possesses both prenyl transferase and terpene cyclase activity, converting isopentenyl diphosphate and dimethylallyl diphosphate into geranylfarnesyl diphosphate (GFPP) and further converting GFPP into ophiobolin F, respectively. Other sesterterpenoids (C(25) terpenoids) are found as minor products of oblA. The cytochrome P450 monooxygenase oblB then catalyzes a four-step oxidative transformation of ophiobolin F to yield ophiobolin C. The FAD-dependent oxidoreductase oblC might be involved in a later oxidation step that produces ophiobolin A. The polypeptide is Ophiobolin F synthase oblA (Cochliobolus heterostrophus (strain C5 / ATCC 48332 / race O) (Southern corn leaf blight fungus)).